Here is a 333-residue protein sequence, read N- to C-terminus: Mitochondrial fission regulator 1 (333 aa).

At Ser-119 the chain carries Phosphoserine. The span at 286–307 (YRSDSQDEVEKGVPKSESEATS) shows a compositional bias: basic and acidic residues. The interval 286-315 (YRSDSQDEVEKGVPKSESEATSERVLFGPH) is disordered.

The protein belongs to the MTFR1 family.

Its subcellular location is the mitochondrion. Functionally, may play a role in mitochondrial aerobic respiration. May also regulate mitochondrial organization and fission. The polypeptide is Mitochondrial fission regulator 1 (MTFR1) (Pongo abelii (Sumatran orangutan)).